A 276-amino-acid chain; its full sequence is N-alpha-acetyltransferase 60 (276 aa).

The region spanning 34 to 239 is the N-acetyltransferase domain; the sequence is VQLRFLVPDD…WTLLDHIKHY (206 aa). Tyrosine 59 is a binding site for substrate. Residue tyrosine 139 is part of the active site. Leucine 141 serves as a coordination point for substrate. Acetyl-CoA is bound by residues 143-145 and 151-156; these read LGV and RNGIGS. Histidine 180 is a catalytic residue. Acetyl-CoA-binding positions include asparagine 185 and 192 to 195; that span reads YEKR. Residues 204–215 form a required for homodimerization region; sequence PYYYNIRGKGKD. Tyrosine 207 contributes to the substrate binding site.

It belongs to the acetyltransferase family. NAA60 subfamily.

It catalyses the reaction N-terminal L-methionyl-[transmembrane protein] + acetyl-CoA = N-terminal N(alpha)-acetyl-L-methionyl-[transmembrane protein] + CoA + H(+). The catalysed reaction is L-lysyl-[protein] + acetyl-CoA = N(6)-acetyl-L-lysyl-[protein] + CoA + H(+). In terms of biological role, displays alpha (N-terminal) acetyltransferase activity towards a range of N-terminal sequences including those starting with Met-Lys, Met-Val, Met-Ala and Met-Met. Required for normal chromosomal segregation during anaphase. Its function is as follows. Shows histone acetyltransferase activity toward free histones. Functionally, does not show histone acetyltransferase activity toward free histones. The chain is N-alpha-acetyltransferase 60 from Drosophila melanogaster (Fruit fly).